Here is a 194-residue protein sequence, read N- to C-terminus: dITP/XTP pyrophosphatase (194 aa).

Residue 8 to 13 (TSNPGK) participates in substrate binding. Residues E38 and D67 each contribute to the Mg(2+) site. The Proton acceptor role is filled by D67. Residues S68, 152 to 155 (FGYD), K175, and 180 to 181 (HR) each bind substrate.

Belongs to the HAM1 NTPase family. As to quaternary structure, homodimer. The cofactor is Mg(2+).

The catalysed reaction is XTP + H2O = XMP + diphosphate + H(+). The enzyme catalyses dITP + H2O = dIMP + diphosphate + H(+). It carries out the reaction ITP + H2O = IMP + diphosphate + H(+). Pyrophosphatase that catalyzes the hydrolysis of nucleoside triphosphates to their monophosphate derivatives, with a high preference for the non-canonical purine nucleotides XTP (xanthosine triphosphate), dITP (deoxyinosine triphosphate) and ITP. Seems to function as a house-cleaning enzyme that removes non-canonical purine nucleotides from the nucleotide pool, thus preventing their incorporation into DNA/RNA and avoiding chromosomal lesions. The chain is dITP/XTP pyrophosphatase from Legionella pneumophila (strain Lens).